A 304-amino-acid chain; its full sequence is Ribokinase (304 aa).

Substrate-binding positions include 12-14 (NVD), 41-45 (GKGAN), and glutamate 142. Residues asparagine 186 and 222–227 (TLGKQG) contribute to the ATP site. 2 residues coordinate K(+): aspartate 248 and threonine 250. ATP contacts are provided by residues 253-254 (GD) and asparagine 279. Residue aspartate 254 coordinates substrate. Aspartate 254 (proton acceptor) is an active-site residue. K(+) is bound by residues threonine 285, lysine 288, glycine 290, and serine 294.

Belongs to the carbohydrate kinase PfkB family. Ribokinase subfamily. In terms of assembly, homodimer. Mg(2+) is required as a cofactor.

Its subcellular location is the cytoplasm. The enzyme catalyses D-ribose + ATP = D-ribose 5-phosphate + ADP + H(+). It participates in carbohydrate metabolism; D-ribose degradation; D-ribose 5-phosphate from beta-D-ribopyranose: step 2/2. Its activity is regulated as follows. Activated by a monovalent cation that binds near, but not in, the active site. The most likely occupant of the site in vivo is potassium. Ion binding induces a conformational change that may alter substrate affinity. Catalyzes the phosphorylation of ribose at O-5 in a reaction requiring ATP and magnesium. The resulting D-ribose-5-phosphate can then be used either for sythesis of nucleotides, histidine, and tryptophan, or as a component of the pentose phosphate pathway. The chain is Ribokinase from Staphylococcus aureus (strain COL).